The following is a 306-amino-acid chain: Methionyl-tRNA formyltransferase (306 aa).

110-113 (SLLP) serves as a coordination point for (6S)-5,6,7,8-tetrahydrofolate.

This sequence belongs to the Fmt family.

It catalyses the reaction L-methionyl-tRNA(fMet) + (6R)-10-formyltetrahydrofolate = N-formyl-L-methionyl-tRNA(fMet) + (6S)-5,6,7,8-tetrahydrofolate + H(+). Its function is as follows. Attaches a formyl group to the free amino group of methionyl-tRNA(fMet). The formyl group appears to play a dual role in the initiator identity of N-formylmethionyl-tRNA by promoting its recognition by IF2 and preventing the misappropriation of this tRNA by the elongation apparatus. The protein is Methionyl-tRNA formyltransferase of Brucella anthropi (strain ATCC 49188 / DSM 6882 / CCUG 24695 / JCM 21032 / LMG 3331 / NBRC 15819 / NCTC 12168 / Alc 37) (Ochrobactrum anthropi).